We begin with the raw amino-acid sequence, 509 residues long: Glutamyl-tRNA(Gln) amidotransferase subunit B, mitochondrial (509 aa).

It belongs to the GatB/GatE family. GatB subfamily. Subunit of the heterotrimeric GatFAB amidotransferase (AdT) complex, composed of A, B and F subunits.

It is found in the mitochondrion. It catalyses the reaction L-glutamyl-tRNA(Gln) + L-glutamine + ATP + H2O = L-glutaminyl-tRNA(Gln) + L-glutamate + ADP + phosphate + H(+). Functionally, allows the formation of correctly charged Gln-tRNA(Gln) through the transamidation of misacylated Glu-tRNA(Gln) in the mitochondria. The reaction takes place in the presence of glutamine and ATP through an activated gamma-phospho-Glu-tRNA(Gln). The protein is Glutamyl-tRNA(Gln) amidotransferase subunit B, mitochondrial of Candida dubliniensis (strain CD36 / ATCC MYA-646 / CBS 7987 / NCPF 3949 / NRRL Y-17841) (Yeast).